Reading from the N-terminus, the 278-residue chain is Betaine--homocysteine S-methyltransferase 1 (278 aa).

The region spanning Lys11–Arg278 is the Hcy-binding domain. N6-succinyllysine is present on residues Lys40, Lys93, and Lys98. Cys217 contributes to the Zn(2+) binding site. 2 positions are modified to N6-succinyllysine: Lys232 and Lys241.

As to quaternary structure, homotetramer. Requires Zn(2+) as cofactor. As to expression, found exclusively in liver and kidney.

The protein resides in the cytoplasm. It localises to the cytosol. The protein localises to the nucleus. The enzyme catalyses L-homocysteine + glycine betaine = N,N-dimethylglycine + L-methionine. The protein operates within amine and polyamine degradation; betaine degradation; sarcosine from betaine: step 1/2. It participates in amino-acid biosynthesis; L-methionine biosynthesis via de novo pathway; L-methionine from L-homocysteine (BhmT route): step 1/1. Inhibited by dimethylglycine and methylthioacetate. Involved in the regulation of homocysteine metabolism. Converts betaine and homocysteine to dimethylglycine and methionine, respectively. This reaction is also required for the irreversible oxidation of choline. The chain is Betaine--homocysteine S-methyltransferase 1 from Sus scrofa (Pig).